Reading from the N-terminus, the 100-residue chain is Sec-independent protein translocase protein TatA (100 aa).

The helical transmembrane segment at 1–21 threads the bilayer; it reads MGALRPWHIAVLVVVLILLFG. The segment covering 46–58 has biased composition (basic and acidic residues); it reads LHDDDRDLAEKAD. The segment at 46-100 is disordered; it reads LHDDDRDLAEKADAQAGYQPMPPQVQQGQHPQQSPYPAPPQQQPVVDPVQRTRDS. Low complexity predominate over residues 69-78; it reads QVQQGQHPQQ.

It belongs to the TatA/E family. As to quaternary structure, the Tat system comprises two distinct complexes: a TatABC complex, containing multiple copies of TatA, TatB and TatC subunits, and a separate TatA complex, containing only TatA subunits. Substrates initially bind to the TatABC complex, which probably triggers association of the separate TatA complex to form the active translocon.

The protein localises to the cell membrane. Functionally, part of the twin-arginine translocation (Tat) system that transports large folded proteins containing a characteristic twin-arginine motif in their signal peptide across membranes. TatA could form the protein-conducting channel of the Tat system. This Salinispora tropica (strain ATCC BAA-916 / DSM 44818 / JCM 13857 / NBRC 105044 / CNB-440) protein is Sec-independent protein translocase protein TatA.